A 150-amino-acid chain; its full sequence is UPF0208 membrane protein VIBHAR_02941 (150 aa).

The next 2 helical transmembrane spans lie at 42 to 62 and 70 to 90; these read FGIK…MAFN and AIVV…WLGS.

Belongs to the UPF0208 family.

Its subcellular location is the cell inner membrane. This Vibrio campbellii (strain ATCC BAA-1116) protein is UPF0208 membrane protein VIBHAR_02941.